Consider the following 409-residue polypeptide: PPE family protein PPE32 (409 aa).

It belongs to the mycobacterial PPE family. In terms of assembly, interacts with host Toll-like receptor 2 (TLR2).

The protein resides in the secreted. Its subcellular location is the cell wall. It is found in the cell surface. In terms of biological role, virulence factor that modulates the production of host cytokines. This chain is PPE family protein PPE32, found in Mycobacterium tuberculosis (strain CDC 1551 / Oshkosh).